A 640-amino-acid polypeptide reads, in one-letter code: Protein ALTERED PHOSPHATE STARVATION RESPONSE 1 (640 aa).

The segment at threonine 60–serine 175 is disordered. A compositionally biased stretch (pro residues) spans proline 68 to serine 87. The segment covering proline 88–valine 103 has biased composition (low complexity). Over residues leucine 104–serine 118 the composition is skewed to pro residues. Residues threonine 144 to valine 173 show a composition bias toward low complexity. Positions lysine 336–threonine 371 form a coiled coil.

In terms of tissue distribution, expressed in the root tip of primary and lateral roots, specifically in the meristematic region, including the quiescent center and lateral root cap cells.

The protein localises to the nucleus. Functionally, required for the coordination of cell differentiation and cell elongation in the root tip. Required for the coordination of cell processes necessary for correct root growth in response to phosphate starvation, through the modulation of the auxin transporter protein PIN7. This chain is Protein ALTERED PHOSPHATE STARVATION RESPONSE 1, found in Arabidopsis thaliana (Mouse-ear cress).